Here is a 314-residue protein sequence, read N- to C-terminus: DNA-directed RNA polymerase subunit alpha (314 aa).

The alpha N-terminal domain (alpha-NTD) stretch occupies residues 1-227 (MLEIEKPKIE…DYLKLFVALT (227 aa)). An alpha C-terminal domain (alpha-CTD) region spans residues 244-314 (QDKILEMTIE…LGLSLRKSED (71 aa)).

Belongs to the RNA polymerase alpha chain family. In terms of assembly, homodimer. The RNAP catalytic core consists of 2 alpha, 1 beta, 1 beta' and 1 omega subunit. When a sigma factor is associated with the core the holoenzyme is formed, which can initiate transcription.

It carries out the reaction RNA(n) + a ribonucleoside 5'-triphosphate = RNA(n+1) + diphosphate. Functionally, DNA-dependent RNA polymerase catalyzes the transcription of DNA into RNA using the four ribonucleoside triphosphates as substrates. The chain is DNA-directed RNA polymerase subunit alpha from Heliobacterium modesticaldum (strain ATCC 51547 / Ice1).